Reading from the N-terminus, the 657-residue chain is THO complex subunit 1 (657 aa).

Met1 carries the N-acetylmethionine modification. Residue Ser2 is modified to Phosphoserine. At Thr4 the chain carries Phosphothreonine. Residue Lys31 forms a Glycyl lysine isopeptide (Lys-Gly) (interchain with G-Cter in SUMO2) linkage. Lys133 is modified (N6-acetyllysine). Positions 133-167 are dock domain; interaction with THOC2; that stretch reads KNYLLRMCNDLLRRLSKSQNTVFCGRIQLFLARLF. Positions 194 to 221 are disordered; it reads QESTLGQKHTEDREEGMDVEEGEMGDDE. The span at 206–221 shows a compositional bias: acidic residues; sequence REEGMDVEEGEMGDDE. The tract at residues 227–397 is dock domain; interaction with THOC2; the sequence is SIPIDYNLYR…WNSWKNEGCP (171 aa). Lys300 carries the post-translational modification N6-acetyllysine. A Glycyl lysine isopeptide (Lys-Gly) (interchain with G-Cter in SUMO2) cross-link involves residue Lys408. Positions 414–430 match the Nuclear localization signal motif; sequence RKRAAPEDFLGKGPNKK. The tract at residues 533–569 is disordered; it reads LPPPSEEIKTGEDEDEEDNDALLKENESPDVRRDKPI. A Phosphoserine modification is found at Ser537. Thr542 carries the phosphothreonine modification. Positions 553–569 are enriched in basic and acidic residues; sequence ALLKENESPDVRRDKPI. At Ser560 the chain carries Phosphoserine. A Death domain is found at 570–653; that stretch reads TGEQIESFAN…DLAESLTNDT (84 aa). A Glycyl lysine isopeptide (Lys-Gly) (interchain with G-Cter in SUMO2) cross-link involves residue Lys580. Residue Lys595 forms a Glycyl lysine isopeptide (Lys-Gly) (interchain with G-Cter in SUMO1); alternate linkage. Lys595 is covalently cross-linked (Glycyl lysine isopeptide (Lys-Gly) (interchain with G-Cter in SUMO2); alternate).

This sequence belongs to the THOC1 family. Component of the THO subcomplex, which is composed of THOC1, THOC2, THOC3, THOC5, THOC6 and THOC7. The THO subcomplex interacts with DDX39B to form the THO-DDX39B complex which multimerizes into a 28-subunit tetrameric assembly. Component of the transcription/export (TREX) complex at least composed of ALYREF/THOC4, DDX39B, SARNP/CIP29, CHTOP and the THO subcomplex; in the complex interacts with THOC2, THOC5 and THOC7. TREX seems to have a dynamic structure involving ATP-dependent remodeling. Binds to the hypophosphorylated form of RB1. Interacts with RNA polymerase II. Interacts with LUZP4. Interacts with THOC5. Post-translationally, expression is altered specifically during apoptosis and is accompanied by the appearance of novel forms with smaller apparent molecular mass. Polyubiquitinated, leading to proteasomal degradation; probably involves NEDD4. In terms of tissue distribution, in the inner ear, specifically expressed in inner and outer hair cells (at protein level).

It localises to the nucleus. The protein localises to the nucleoplasm. The protein resides in the nucleus matrix. It is found in the cytoplasm. Its subcellular location is the cytosol. In terms of biological role, component of the THO subcomplex of the TREX complex which is thought to couple mRNA transcription, processing and nuclear export, and which specifically associates with spliced mRNA and not with unspliced pre-mRNA. Required for efficient export of polyadenylated RNA. The THOC1-THOC2-THOC3 core complex alone is sufficient to bind export factor NXF1-NXT1 and promote ATPase activity of DDX39B. TREX is recruited to spliced mRNAs by a transcription-independent mechanism, binds to mRNA upstream of the exon-junction complex (EJC) and is recruited in a splicing- and cap-dependent manner to a region near the 5' end of the mRNA where it functions in mRNA export to the cytoplasm via the TAP/NXF1 pathway. Regulates transcriptional elongation of a subset of genes. Involved in genome stability by preventing co-transcriptional R-loop formation. May play a role in hair cell formation, hence may be involved in hearing. Its function is as follows. Participates in an apoptotic pathway which is characterized by activation of caspase-6, increases in the expression of BAK1 and BCL2L1 and activation of NF-kappa-B. This pathway does not require p53/TP53, nor does the presence of p53/TP53 affect the efficiency of cell killing. Activates a G2/M cell cycle checkpoint prior to the onset of apoptosis. Apoptosis is inhibited by association with RB1. Essential for early embryonic development. Required for normal gene expression during postnatal testis development. The protein is THO complex subunit 1 (Thoc1) of Mus musculus (Mouse).